Consider the following 118-residue polypeptide: Small ribosomal subunit protein uS17 (118 aa).

This sequence belongs to the universal ribosomal protein uS17 family. As to quaternary structure, part of the 30S ribosomal subunit.

Functionally, one of the primary rRNA binding proteins, it binds specifically to the 5'-end of 16S ribosomal RNA. This is Small ribosomal subunit protein uS17 from Methanopyrus kandleri (strain AV19 / DSM 6324 / JCM 9639 / NBRC 100938).